A 721-amino-acid polypeptide reads, in one-letter code: MVERIVNSEDVSLLVSGRQSNPHKFLGIVSENSSQDRIILFRPGAHSVVVELQGNIAHAQHHHSGIFSLTAPKGTLPQDYRIYHQNGLLAHDPYAFPPLWGEVDSFLFHQGTHYKIYECMGAIPYNVQGISGVLFVVWAPHAQRVSVVGDFNFWNGLVNPLRKVSDLGVWELFIPGLEEGTLYKWEIVSASGEVLIKTDPYGKRFDVPPHAPSRVVDSDRYTWHDAAWMEKRKHRGDQPLAIYEVHVGSWQWHEGKPLGYRELAKKLAAYCKEMHYTHVELLPVTEHPLNESWGYQVTGYYAPTCRYGTPEDFQFFVDHLHRENIGVILDWVPGHFPTDGFALAHFDGEALYESIENHEPLHPHWRTYTFDYRCNEVVNFLLGSALFWLDKMHIDGLRVDAVTSMLYLDYGRQEGEWSPNIYGGRENLQAIEFIKHLNSVVHREFPGVLTFAEESTDFPKVTQAVAQGGLGFDYKWNLGWMHDTFRYIQVDPLFRSYHHKDLTFSLWYAFNERYLLPLSHDEVVHGKGSLLQKMPGDTWTKFAHMRLLLSYHICQPGKKLLFMGGEFAQGKEWTPDSPLDWHLLDHPDHAYLHKCVARMNALYCDLPYFWKGDGKQGSFRWVDFKDTENHVIAYYRFSGEDRSSALLCVHHFSSGYFPSYVLYCQDIHSCQLLFNSDDCCFGGSGKGNRQPVLCLDQHVSWGIDIELPPLATLIFHVDFVN.

Asp-400 serves as the catalytic Nucleophile. Glu-453 acts as the Proton donor in catalysis.

Belongs to the glycosyl hydrolase 13 family. GlgB subfamily. As to quaternary structure, monomer.

The enzyme catalyses Transfers a segment of a (1-&gt;4)-alpha-D-glucan chain to a primary hydroxy group in a similar glucan chain.. It participates in glycan biosynthesis; glycogen biosynthesis. Its function is as follows. Catalyzes the formation of the alpha-1,6-glucosidic linkages in glycogen by scission of a 1,4-alpha-linked oligosaccharide from growing alpha-1,4-glucan chains and the subsequent attachment of the oligosaccharide to the alpha-1,6 position. This is 1,4-alpha-glucan branching enzyme GlgB from Chlamydia abortus (strain DSM 27085 / S26/3) (Chlamydophila abortus).